The chain runs to 62 residues: Calmodulin regulator protein PCP4 (62 aa).

Residues 1-40 (MSERQGAGTTNGKDKPSGENDGQKKVQEEFDIDMDAPETE) are disordered. A compositionally biased stretch (basic and acidic residues) spans 12-28 (GKDKPSGENDGQKKVQE). Positions 28-40 (EEFDIDMDAPETE) are acidic; binds calcium and is required for modulating the calcium-binding kinetics of calmodulin. The 24-residue stretch at 39 to 62 (TERAAVAIQSQFRKFQKKKAGSQS) folds into the IQ domain.

It belongs to the PCP4 family. As to quaternary structure, binds to both calcium-free and calcium-bound calmodulin. The affinity for the calcium-bound form is 50-fold greater.

Its function is as follows. Functions as a modulator of calcium-binding by calmodulin. Thereby, regulates calmodulin activity and the different processes it controls. For instance, may play a role in neuronal differentiation through activation of calmodulin-dependent kinase signaling pathways. The protein is Calmodulin regulator protein PCP4 of Bos taurus (Bovine).